Reading from the N-terminus, the 129-residue chain is Large ribosomal subunit protein bL12 (129 aa).

It belongs to the bacterial ribosomal protein bL12 family. In terms of assembly, homodimer. Part of the ribosomal stalk of the 50S ribosomal subunit. Forms a multimeric L10(L12)X complex, where L10 forms an elongated spine to which 2 to 4 L12 dimers bind in a sequential fashion. Binds GTP-bound translation factors.

In terms of biological role, forms part of the ribosomal stalk which helps the ribosome interact with GTP-bound translation factors. Is thus essential for accurate translation. The sequence is that of Large ribosomal subunit protein bL12 from Photobacterium profundum (strain SS9).